We begin with the raw amino-acid sequence, 452 residues long: Tripartite motif-containing protein 51 (452 aa).

An RING-type zinc finger spans residues 15–56 (CPICMNYFLDPVTIDCGHSFCRPCLYLNWQDTAVLAQCSECK). The segment at 88–129 (SEEQICGMHRETKKMFCEVDKSLLCLPCSNSQEHRNHIHCPI) adopts a B box-type zinc-finger fold. Zn(2+)-binding residues include Cys-93, His-96, Cys-115, and His-121. Residues 269–452 (ELSAGPITGL…LRPIFCCSHF (184 aa)) enclose the B30.2/SPRY domain.

Belongs to the TRIM/RBCC family.

The protein is Tripartite motif-containing protein 51 (TRIM51) of Homo sapiens (Human).